A 27-amino-acid polypeptide reads, in one-letter code: Putative phosphoglycerate kinase (27 aa).

Belongs to the phosphoglycerate kinase family. In terms of assembly, monomer. The cofactor is Mg(2+).

It catalyses the reaction (2R)-3-phosphoglycerate + ATP = (2R)-3-phospho-glyceroyl phosphate + ADP. The sequence is that of Putative phosphoglycerate kinase from Pinus strobus (Eastern white pine).